The following is a 395-amino-acid chain: Major outer membrane protein P.IA (395 aa).

An N-terminal signal peptide occupies residues 1–19 (MRKKLTALVLSALPLAAVA).

Belongs to the Gram-negative porin family. As to quaternary structure, homotrimer.

The protein localises to the cell outer membrane. Serves as a slightly cation selective porin. Major antigen on the gonococcal cell surface and it may have pathogenic properties in addition to its porin activity. The sequence is that of Major outer membrane protein P.IA (porA) from Neisseria meningitidis serogroup A / serotype 4A (strain DSM 15465 / Z2491).